The primary structure comprises 338 residues: Fructose-1,6-bisphosphatase class 1 1 (338 aa).

Residues E88, D107, L109, and D110 each contribute to the Mg(2+) site. Residues 110–113 (DGSS) and N196 contribute to the substrate site. E268 is a binding site for Mg(2+).

The protein belongs to the FBPase class 1 family. As to quaternary structure, homotetramer. Mg(2+) is required as a cofactor.

The protein resides in the cytoplasm. The catalysed reaction is beta-D-fructose 1,6-bisphosphate + H2O = beta-D-fructose 6-phosphate + phosphate. It functions in the pathway carbohydrate biosynthesis; Calvin cycle. In Bradyrhizobium sp. (strain BTAi1 / ATCC BAA-1182), this protein is Fructose-1,6-bisphosphatase class 1 1.